The chain runs to 126 residues: Large ribosomal subunit protein bL17 (126 aa).

The protein belongs to the bacterial ribosomal protein bL17 family. In terms of assembly, part of the 50S ribosomal subunit. Contacts protein L32.

The protein is Large ribosomal subunit protein bL17 of Laribacter hongkongensis (strain HLHK9).